The chain runs to 498 residues: Isoflavone 2'-hydroxylase (498 aa).

A helical transmembrane segment spans residues 3–23 (ILSYLCYSLFYLSIFFIIRLL). Heme is bound at residue C436.

This sequence belongs to the cytochrome P450 family. The cofactor is heme. As to expression, expressed constitutively in roots, but present at very low levels in uninfected stems and leaves.

The protein localises to the endoplasmic reticulum membrane. It carries out the reaction formononetin + reduced [NADPH--hemoprotein reductase] + O2 = 2'-hydroxyformononetin + oxidized [NADPH--hemoprotein reductase] + H2O + H(+). Involved in the biosynthesis of the pterocarpin phytoalexins. Acts on isoflavones with a 4'-methoxy group on the B-ring, such as formononetin and biochanin A, and on pseudobaptigenin. Has a low activity with daidzein and genistein and no activity with the 7-O-methylated isoflavonoids isoformononetin and prunetin. The protein is Isoflavone 2'-hydroxylase of Medicago truncatula (Barrel medic).